Here is a 359-residue protein sequence, read N- to C-terminus: Putative nucleotidyltransferase MAB21L1 (359 aa).

A ribonucleoside 5'-triphosphate contacts are provided by residues 23–24 (RK) and 63–66 (YEGL). Residues glutamate 73 and glutamate 75 each contribute to the Mg(2+) site. A ribonucleoside 5'-triphosphate is bound by residues lysine 248 and 252–255 (SILK).

Belongs to the mab-21 family. Monomer. Homodecamer; composed of 2 back to back homopentamers. The protein may exist as monomer in solution and oiligomerizes upon ligand binding.

Its subcellular location is the nucleus. Functionally, putative nucleotidyltransferase required for several aspects of embryonic development including normal development of the eye. It is unclear whether it displays nucleotidyltransferase activity in vivo. Binds single-stranded RNA (ssRNA). The protein is Putative nucleotidyltransferase MAB21L1 (MAB21L1) of Bos taurus (Bovine).